The sequence spans 348 residues: S-adenosylmethionine:tRNA ribosyltransferase-isomerase (348 aa).

Belongs to the QueA family. As to quaternary structure, monomer.

It localises to the cytoplasm. It catalyses the reaction 7-aminomethyl-7-carbaguanosine(34) in tRNA + S-adenosyl-L-methionine = epoxyqueuosine(34) in tRNA + adenine + L-methionine + 2 H(+). Its pathway is tRNA modification; tRNA-queuosine biosynthesis. In terms of biological role, transfers and isomerizes the ribose moiety from AdoMet to the 7-aminomethyl group of 7-deazaguanine (preQ1-tRNA) to give epoxyqueuosine (oQ-tRNA). The protein is S-adenosylmethionine:tRNA ribosyltransferase-isomerase of Polynucleobacter asymbioticus (strain DSM 18221 / CIP 109841 / QLW-P1DMWA-1) (Polynucleobacter necessarius subsp. asymbioticus).